The following is a 655-amino-acid chain: p-hydroxybenzoic acid efflux pump subunit AaeB (655 aa).

Transmembrane regions (helical) follow at residues 13 to 33, 38 to 58, 69 to 89, 93 to 113, 121 to 141, 152 to 172, 370 to 390, 407 to 427, 431 to 451, and 482 to 502; these read FAVK…HFQL, WAVL…GGEP, LRII…IAMI, LLMI…SSLV, WGLA…EPLL, EIVI…PRSI, LFWL…IAVV, FIYG…VIIP, QSML…GIEV, and FLDS…VILL.

This sequence belongs to the aromatic acid exporter ArAE (TC 2.A.85) family.

Its subcellular location is the cell inner membrane. Forms an efflux pump with AaeA. Could function as a metabolic relief valve, allowing to eliminate certain compounds when they accumulate to high levels in the cell. The chain is p-hydroxybenzoic acid efflux pump subunit AaeB from Shigella dysenteriae serotype 1 (strain Sd197).